Here is a 140-residue protein sequence, read N- to C-terminus: Large ribosomal subunit protein uL14 (140 aa).

The protein belongs to the universal ribosomal protein uL14 family.

In Brugia malayi (Filarial nematode worm), this protein is Large ribosomal subunit protein uL14 (RPL23).